Here is a 61-residue protein sequence, read N- to C-terminus: Putative antitoxin PYRAB11980 (61 aa).

The protein belongs to the UPF0165 family.

Possibly the antitoxin component of a type II toxin-antitoxin (TA) system. This is Putative antitoxin PYRAB11980 from Pyrococcus abyssi (strain GE5 / Orsay).